A 551-amino-acid polypeptide reads, in one-letter code: MRSDVIKKGIERAPHRSLFKAMGFTDEELERPLIGVANSFNELIPGHIHLRKIAEAVKAGIRMAGGTPLEFNTIGICDGIAMNHLGMKYSLPSRELIADSVELVARVYHFDGIVVIASCDKIIPGMLMAIARLNIPAIFVSGGPMLPGRFKGEYVDVKTVFEAVGAVKAGKMSYEELKLLENFACPGCGSCAGMFTANTMNALTEALGISLPWNGTAPAPYAHRIRIAKETGMQIVKLVEKDVKARDILTREAFEDAIAVDMALGGSTNTVLHLMAIANEAKVDLSLEDFDRISEKTPTLAKLSPAGKHFVVDLYEAGGILGVMKRLSELGLIHEDRLTVSLKTVGELLKSAFVSRDDVIRPVTNPYHPRGGIMILRGTLAPNGAVIKVSAVEGVEVFEGPAKVFDSEEEATAAILSGKIERGDVVVIRYEGPKGGPGMREMLTPTSAIAGMGLDKDVALVTDGRFSGATRGLSVGHVSPEAAEGGPIALVKDGDIIRIDLKNKRIDLLVDEEELRKRREEWKPKVKELTGYLKRYSTLVTSANTGAILRH.

Asp78 is a binding site for Mg(2+). A [2Fe-2S] cluster-binding site is contributed by Cys119. Asp120 and Lys121 together coordinate Mg(2+). Lys121 is subject to N6-carboxylysine. Position 191 (Cys191) interacts with [2Fe-2S] cluster. Glu441 is a Mg(2+) binding site. Ser467 (proton acceptor) is an active-site residue.

Belongs to the IlvD/Edd family. Homodimer. [2Fe-2S] cluster is required as a cofactor. Requires Mg(2+) as cofactor.

The enzyme catalyses (2R)-2,3-dihydroxy-3-methylbutanoate = 3-methyl-2-oxobutanoate + H2O. It carries out the reaction (2R,3R)-2,3-dihydroxy-3-methylpentanoate = (S)-3-methyl-2-oxopentanoate + H2O. It functions in the pathway amino-acid biosynthesis; L-isoleucine biosynthesis; L-isoleucine from 2-oxobutanoate: step 3/4. It participates in amino-acid biosynthesis; L-valine biosynthesis; L-valine from pyruvate: step 3/4. Its function is as follows. Functions in the biosynthesis of branched-chain amino acids. Catalyzes the dehydration of (2R,3R)-2,3-dihydroxy-3-methylpentanoate (2,3-dihydroxy-3-methylvalerate) into 2-oxo-3-methylpentanoate (2-oxo-3-methylvalerate) and of (2R)-2,3-dihydroxy-3-methylbutanoate (2,3-dihydroxyisovalerate) into 2-oxo-3-methylbutanoate (2-oxoisovalerate), the penultimate precursor to L-isoleucine and L-valine, respectively. In Pyrococcus furiosus (strain ATCC 43587 / DSM 3638 / JCM 8422 / Vc1), this protein is Dihydroxy-acid dehydratase.